Reading from the N-terminus, the 323-residue chain is Acetyl-coenzyme A carboxylase carboxyl transferase subunit alpha 1 (323 aa).

The CoA carboxyltransferase C-terminal domain maps to 39–293; the sequence is RLSKKSQQLT…RRALGDSLRQ (255 aa).

It belongs to the AccA family. In terms of assembly, acetyl-CoA carboxylase is a heterohexamer composed of biotin carboxyl carrier protein (AccB), biotin carboxylase (AccC) and two subunits each of ACCase subunit alpha (AccA) and ACCase subunit beta (AccD).

It is found in the cytoplasm. The enzyme catalyses N(6)-carboxybiotinyl-L-lysyl-[protein] + acetyl-CoA = N(6)-biotinyl-L-lysyl-[protein] + malonyl-CoA. It functions in the pathway lipid metabolism; malonyl-CoA biosynthesis; malonyl-CoA from acetyl-CoA: step 1/1. In terms of biological role, component of the acetyl coenzyme A carboxylase (ACC) complex. First, biotin carboxylase catalyzes the carboxylation of biotin on its carrier protein (BCCP) and then the CO(2) group is transferred by the carboxyltransferase to acetyl-CoA to form malonyl-CoA. Its function is as follows. Does not confer resistance to the endogenous polyketide antibiotic thailandamide, does not confer resistance to thailandamide when expressed in S.typhimurium. The polypeptide is Acetyl-coenzyme A carboxylase carboxyl transferase subunit alpha 1 (Burkholderia thailandensis (strain ATCC 700388 / DSM 13276 / CCUG 48851 / CIP 106301 / E264)).